A 181-amino-acid chain; its full sequence is Adenine phosphoribosyltransferase (181 aa).

It belongs to the purine/pyrimidine phosphoribosyltransferase family. Homodimer.

It is found in the cytoplasm. The catalysed reaction is AMP + diphosphate = 5-phospho-alpha-D-ribose 1-diphosphate + adenine. Its pathway is purine metabolism; AMP biosynthesis via salvage pathway; AMP from adenine: step 1/1. In terms of biological role, catalyzes a salvage reaction resulting in the formation of AMP, that is energically less costly than de novo synthesis. This Vibrio atlanticus (strain LGP32) (Vibrio splendidus (strain Mel32)) protein is Adenine phosphoribosyltransferase.